The primary structure comprises 180 residues: Crossover junction endodeoxyribonuclease RuvC (180 aa).

Active-site residues include Asp7, Glu66, and Asp138. Mg(2+) contacts are provided by Asp7, Glu66, and Asp138.

The protein belongs to the RuvC family. In terms of assembly, homodimer which binds Holliday junction (HJ) DNA. The HJ becomes 2-fold symmetrical on binding to RuvC with unstacked arms; it has a different conformation from HJ DNA in complex with RuvA. In the full resolvosome a probable DNA-RuvA(4)-RuvB(12)-RuvC(2) complex forms which resolves the HJ. It depends on Mg(2+) as a cofactor.

It is found in the cytoplasm. The enzyme catalyses Endonucleolytic cleavage at a junction such as a reciprocal single-stranded crossover between two homologous DNA duplexes (Holliday junction).. The RuvA-RuvB-RuvC complex processes Holliday junction (HJ) DNA during genetic recombination and DNA repair. Endonuclease that resolves HJ intermediates. Cleaves cruciform DNA by making single-stranded nicks across the HJ at symmetrical positions within the homologous arms, yielding a 5'-phosphate and a 3'-hydroxyl group; requires a central core of homology in the junction. The consensus cleavage sequence is 5'-(A/T)TT(C/G)-3'. Cleavage occurs on the 3'-side of the TT dinucleotide at the point of strand exchange. HJ branch migration catalyzed by RuvA-RuvB allows RuvC to scan DNA until it finds its consensus sequence, where it cleaves and resolves the cruciform DNA. The chain is Crossover junction endodeoxyribonuclease RuvC from Paraburkholderia phymatum (strain DSM 17167 / CIP 108236 / LMG 21445 / STM815) (Burkholderia phymatum).